The sequence spans 623 residues: Glutamine--fructose-6-phosphate aminotransferase [isomerizing] (623 aa).

Cysteine 2 functions as the Nucleophile; for GATase activity in the catalytic mechanism. Residues 2 to 228 (CGIVGYIGQA…NDQVVTITAD (227 aa)) enclose the Glutamine amidotransferase type-2 domain. SIS domains lie at 295–435 (IDEA…LRGN) and 468–613 (LGQD…VDQP). The active-site For Fru-6P isomerization activity is the lysine 618.

As to quaternary structure, homodimer.

It is found in the cytoplasm. The catalysed reaction is D-fructose 6-phosphate + L-glutamine = D-glucosamine 6-phosphate + L-glutamate. Its function is as follows. Catalyzes the first step in hexosamine metabolism, converting fructose-6P into glucosamine-6P using glutamine as a nitrogen source. This is Glutamine--fructose-6-phosphate aminotransferase [isomerizing] from Corynebacterium glutamicum (strain ATCC 13032 / DSM 20300 / JCM 1318 / BCRC 11384 / CCUG 27702 / LMG 3730 / NBRC 12168 / NCIMB 10025 / NRRL B-2784 / 534).